The sequence spans 97 residues: RNA-binding protein Hfq (97 aa).

Residues 10–70 (DPFLNALRKE…ISTIVPARSV (61 aa)) form the Sm domain. Residues 74-97 (HENRPQAAPTSTLVQVETVQQPAE) form a disordered region. A compositionally biased stretch (polar residues) spans 81–97 (APTSTLVQVETVQQPAE).

Belongs to the Hfq family. In terms of assembly, homohexamer.

Its function is as follows. RNA chaperone that binds small regulatory RNA (sRNAs) and mRNAs to facilitate mRNA translational regulation in response to envelope stress, environmental stress and changes in metabolite concentrations. Also binds with high specificity to tRNAs. In Neisseria meningitidis serogroup A / serotype 4A (strain DSM 15465 / Z2491), this protein is RNA-binding protein Hfq.